The chain runs to 182 residues: Ribosome-recycling factor (182 aa).

This sequence belongs to the RRF family.

The protein resides in the cytoplasm. Functionally, responsible for the release of ribosomes from messenger RNA at the termination of protein biosynthesis. May increase the efficiency of translation by recycling ribosomes from one round of translation to another. In Parasynechococcus marenigrum (strain WH8102), this protein is Ribosome-recycling factor.